The sequence spans 198 residues: Holliday junction resolvase RecU (198 aa).

Residues 1 to 22 are disordered; that stretch reads MVNYPHKVSSQKRQTSLSQPKN. The segment covering 11–22 has biased composition (polar residues); that stretch reads QKRQTSLSQPKN. Positions 81, 83, 96, and 115 each coordinate Mg(2+).

Belongs to the RecU family. It depends on Mg(2+) as a cofactor.

Its subcellular location is the cytoplasm. The enzyme catalyses Endonucleolytic cleavage at a junction such as a reciprocal single-stranded crossover between two homologous DNA duplexes (Holliday junction).. Functionally, endonuclease that resolves Holliday junction intermediates in genetic recombination. Cleaves mobile four-strand junctions by introducing symmetrical nicks in paired strands. Promotes annealing of linear ssDNA with homologous dsDNA. Required for DNA repair, homologous recombination and chromosome segregation. The sequence is that of Holliday junction resolvase RecU from Streptococcus pneumoniae serotype 2 (strain D39 / NCTC 7466).